Reading from the N-terminus, the 342-residue chain is MHHHLNTLYQGQSLSRESTRDAFGQVVRGEVDPIVLASLLTALKIKGETPEEIAGAAEALLAEARDFPRPDYEFCDIVGTGGDGLNTINVSTTSALVAAACGLKVAKHGNRSVSSKSGSSDLLDKMGIKLDMSPAQARRCLDELGICFLFAPQYHAGVRHAMPVRQALKTRTLFNVLGPLINPARPTYQLMGVYAPELVRPIAETLLALGLKTGMVVHGAGLDEIAIHGPTQVAQIRDGEIREFLLTPADFGLETYPVSAIQGGEPEENRAITAAILEGRGTPAHNAAIAANVAPLLLMAGKAKDLKSAAAEVLAVLASGKTAELAARLATLSHQEASHQEA.

Residues glycine 79, 82-83 (GD), threonine 87, 89-92 (NVST), 107-115 (KHGNRSVSS), and serine 119 contribute to the 5-phospho-alpha-D-ribose 1-diphosphate site. Glycine 79 contributes to the anthranilate binding site. Serine 91 contributes to the Mg(2+) binding site. Asparagine 110 contacts anthranilate. Position 165 (arginine 165) interacts with anthranilate. 2 residues coordinate Mg(2+): aspartate 223 and glutamate 224.

It belongs to the anthranilate phosphoribosyltransferase family. As to quaternary structure, homodimer. The cofactor is Mg(2+).

It carries out the reaction N-(5-phospho-beta-D-ribosyl)anthranilate + diphosphate = 5-phospho-alpha-D-ribose 1-diphosphate + anthranilate. The protein operates within amino-acid biosynthesis; L-tryptophan biosynthesis; L-tryptophan from chorismate: step 2/5. Catalyzes the transfer of the phosphoribosyl group of 5-phosphorylribose-1-pyrophosphate (PRPP) to anthranilate to yield N-(5'-phosphoribosyl)-anthranilate (PRA). This chain is Anthranilate phosphoribosyltransferase, found in Aeromonas hydrophila subsp. hydrophila (strain ATCC 7966 / DSM 30187 / BCRC 13018 / CCUG 14551 / JCM 1027 / KCTC 2358 / NCIMB 9240 / NCTC 8049).